We begin with the raw amino-acid sequence, 350 residues long: Phosphoribosylformylglycinamidine cyclo-ligase (350 aa).

It belongs to the AIR synthase family.

It localises to the cytoplasm. The catalysed reaction is 2-formamido-N(1)-(5-O-phospho-beta-D-ribosyl)acetamidine + ATP = 5-amino-1-(5-phospho-beta-D-ribosyl)imidazole + ADP + phosphate + H(+). The protein operates within purine metabolism; IMP biosynthesis via de novo pathway; 5-amino-1-(5-phospho-D-ribosyl)imidazole from N(2)-formyl-N(1)-(5-phospho-D-ribosyl)glycinamide: step 2/2. The protein is Phosphoribosylformylglycinamidine cyclo-ligase of Pseudoalteromonas translucida (strain TAC 125).